The sequence spans 190 residues: Potassium-transporting ATPase KdpC subunit (190 aa).

The chain crosses the membrane as a helical span at residues 13-33 (IGFLLLTLVCGVLYPGVVTVF).

The protein belongs to the KdpC family. The system is composed of three essential subunits: KdpA, KdpB and KdpC.

Its subcellular location is the cell membrane. Part of the high-affinity ATP-driven potassium transport (or Kdp) system, which catalyzes the hydrolysis of ATP coupled with the electrogenic transport of potassium into the cytoplasm. This subunit acts as a catalytic chaperone that increases the ATP-binding affinity of the ATP-hydrolyzing subunit KdpB by the formation of a transient KdpB/KdpC/ATP ternary complex. This is Potassium-transporting ATPase KdpC subunit from Listeria monocytogenes serovar 1/2a (strain ATCC BAA-679 / EGD-e).